The sequence spans 267 residues: tRNA pseudouridine synthase A (267 aa).

D51 (nucleophile) is an active-site residue. Y109 is a substrate binding site.

It belongs to the tRNA pseudouridine synthase TruA family. In terms of assembly, homodimer.

The catalysed reaction is uridine(38/39/40) in tRNA = pseudouridine(38/39/40) in tRNA. Formation of pseudouridine at positions 38, 39 and 40 in the anticodon stem and loop of transfer RNAs. In Staphylococcus aureus (strain MSSA476), this protein is tRNA pseudouridine synthase A.